Here is a 486-residue protein sequence, read N- to C-terminus: GDP-Man:Man(3)GlcNAc(2)-PP-Dol alpha-1,2-mannosyltransferase (486 aa).

The Lumenal segment spans residues 1-16 (MAGPMCLCGMMRLLTA). A helical membrane pass occupies residues 17-37 (LFIPVLITSVGLCLIFVLLFI). At 38–229 (CTRLWVQRKK…SNNPVLSRLK (192 aa)) the chain is on the cytoplasmic side. The segment at residues 230 to 250 (LIYYYLFALFYGWVGSCSDVI) is an intramembrane region (helical). At 251-393 (MVNSTWTFSH…IGLHTMWNEH (143 aa)) the chain is on the cytoplasmic side. An intramembrane region (helical) is located at residues 394 to 414 (FGIGIVECMAAGTIILAHNSG). Residues 415–486 (GPKLDIVVPH…FLASSEPLFK (72 aa)) lie on the Cytoplasmic side of the membrane.

The protein belongs to the glycosyltransferase group 1 family. Glycosyltransferase 4 subfamily.

The protein localises to the endoplasmic reticulum membrane. The catalysed reaction is an alpha-D-Man-(1-&gt;3)-[alpha-D-Man-(1-&gt;6)]-beta-D-Man-(1-&gt;4)-beta-D-GlcNAc-(1-&gt;4)-alpha-D-GlcNAc-diphospho-di-trans,poly-cis-dolichol + 2 GDP-alpha-D-mannose = an alpha-D-Man-(1-&gt;2)-alpha-D-Man-(1-&gt;2)-alpha-D-Man-(1-&gt;3)-[alpha-D-Man-(1-&gt;6)]-beta-D-Man-(1-&gt;4)-beta-D-GlcNAc-(1-&gt;4)-alpha-D-GlcNAc-diphospho-di-trans,poly-cis-dolichol + 2 GDP + 2 H(+). The protein operates within protein modification; protein glycosylation. GDP-Man:Man(3)GlcNAc(2)-PP-Dol alpha-1,2-mannosyltransferase that operates in the biosynthetic pathway of dolichol-linked oligosaccharides, the glycan precursors employed in protein asparagine (N)-glycosylation. The assembly of dolichol-linked oligosaccharides begins on the cytosolic side of the endoplasmic reticulum membrane and finishes in its lumen. The sequential addition of sugars to dolichol pyrophosphate produces dolichol-linked oligosaccharides containing fourteen sugars, including two GlcNAcs, nine mannoses and three glucoses. Once assembled, the oligosaccharide is transferred from the lipid to nascent proteins by oligosaccharyltransferases. Catalyzes, on the cytoplasmic face of the endoplasmic reticulum, the addition of the fourth and fifth mannose residues to the dolichol-linked oligosaccharide chain, to produce Man(5)GlcNAc(2)-PP-dolichol core oligosaccharide. Man(5)GlcNAc(2)-PP-dolichol is a substrate for ALG3, the following enzyme in the biosynthetic pathway. This chain is GDP-Man:Man(3)GlcNAc(2)-PP-Dol alpha-1,2-mannosyltransferase (alg11), found in Xenopus laevis (African clawed frog).